A 177-amino-acid polypeptide reads, in one-letter code: 18.9 kDa heat shock protein (177 aa).

The tract at residues 1–35 is disordered; the sequence is MSMITSMLGRKQNAQQKGGGGGGRTGGGGGGEIEP. Positions 17 to 32 are enriched in gly residues; that stretch reads KGGGGGGRTGGGGGGE. A sHSP domain is found at 63 to 177; sequence AAGVPSTASM…PHARIIPITN (115 aa).

It belongs to the small heat shock protein (HSP20) family. May form oligomeric structures.

It is found in the cytoplasm. This is 18.9 kDa heat shock protein (HSP18.9) from Oryza sativa subsp. japonica (Rice).